Here is a 629-residue protein sequence, read N- to C-terminus: Rho GTPase-activating protein conundrum (629 aa).

Residues 185–294 (PPKSGTYADI…CRDSSSLDSC (110 aa)) form a required for interaction with Moe region. Residues 237–261 (SIGRSKESRSENDARSQKKKSSEVL) are disordered. Over residues 240–258 (RSKESRSENDARSQKKKSS) the composition is skewed to basic and acidic residues. In terms of domain architecture, Rho-GAP spans 359–565 (VSINALIRRD…ILILRGEKLF (207 aa)).

As to quaternary structure, interacts with Moe (via FERM domain).

Its subcellular location is the cytoplasm. It localises to the cell membrane. The protein localises to the cell cortex. The protein resides in the cell junction. Its function is as follows. GTPase-activating protein (GAP) for Rho1; functions with the ERM protein Moe to regulate Rho1 and control proliferation in the developing epithelium. Recruited by Moe to the cell cortex where it negatively regulates Rho1 activity. Can also promote cell proliferation independently of its GAP activity, perhaps by acting with Arf6 to positively regulate Rac1. The chain is Rho GTPase-activating protein conundrum from Drosophila melanogaster (Fruit fly).